Consider the following 245-residue polypeptide: Acetylglutamate kinase (245 aa).

Residues 41 to 42 (GG), R63, and N156 each bind substrate.

It belongs to the acetylglutamate kinase family. ArgB subfamily.

It localises to the cytoplasm. The enzyme catalyses N-acetyl-L-glutamate + ATP = N-acetyl-L-glutamyl 5-phosphate + ADP. It participates in amino-acid biosynthesis; L-arginine biosynthesis; N(2)-acetyl-L-ornithine from L-glutamate: step 2/4. In terms of biological role, catalyzes the ATP-dependent phosphorylation of N-acetyl-L-glutamate. The protein is Acetylglutamate kinase of Streptococcus mutans serotype c (strain ATCC 700610 / UA159).